A 149-amino-acid polypeptide reads, in one-letter code: Calmodulin-like protein 3 (149 aa).

EF-hand domains lie at 8-43 (EQVT…LGQN), 44-79 (PTEA…KMKD), 81-116 (DNEE…LGEK), and 117-149 (LSDE…LVSK). 19 residues coordinate Ca(2+): D21, D23, D25, C27, E32, D57, D59, N61, T63, E68, D94, D96, N98, E105, D130, D132, D134, Q136, and E141.

This sequence belongs to the calmodulin family. Interacts with MYO10, the interaction is calcium-dependent and essential for MYO10 function in filopodial extension. As to expression, expressed in normal mammary, prostate, cervical, and epidermal tissues. It is greatly reduced or undetectable in transformed cells.

Its function is as follows. May function as a specific light chain of unconventional myosin-10 (MYO10), also enhances MYO10 translation, possibly by acting as a chaperone for the emerging MYO10 heavy chain protein. May compete with calmodulin by binding, with different affinities, to cellular substrates. The chain is Calmodulin-like protein 3 (CALML3) from Homo sapiens (Human).